The following is a 207-amino-acid chain: MEKSEKGNGVAPATRSPMALMGSSRNENQEVNTSMRTAETMLRLVPMALGVAALVVMLKNSQSNDFGSVSYSDLGAFRYLVHANGICAGYSLLSAIIAAVPSPSTMPRAWTFFLLDQILTYVILGAAAVSTEVLYLANKGDSAITWSAACGTFAGFCHKATIAVVITFVAVICYAVLSLVSSYRLFTKFDAPVNYPSKTIEATVFHG.

The segment at 1-30 (MEKSEKGNGVAPATRSPMALMGSSRNENQE) is disordered. The Cytoplasmic segment spans residues 1-37 (MEKSEKGNGVAPATRSPMALMGSSRNENQEVNTSMRT). The chain crosses the membrane as a helical span at residues 38-58 (AETMLRLVPMALGVAALVVML). Topologically, residues 59–79 (KNSQSNDFGSVSYSDLGAFRY) are extracellular. Residues 80 to 100 (LVHANGICAGYSLLSAIIAAV) traverse the membrane as a helical segment. Topologically, residues 101–108 (PSPSTMPR) are cytoplasmic. Residues 109–129 (AWTFFLLDQILTYVILGAAAV) traverse the membrane as a helical segment. Topologically, residues 130-159 (STEVLYLANKGDSAITWSAACGTFAGFCHK) are extracellular. A helical membrane pass occupies residues 160-180 (ATIAVVITFVAVICYAVLSLV). Residues 181–207 (SSYRLFTKFDAPVNYPSKTIEATVFHG) lie on the Cytoplasmic side of the membrane.

It belongs to the Casparian strip membrane proteins (CASP) family. Homodimer and heterodimers.

The protein localises to the cell membrane. The sequence is that of CASP-like protein F16 (F16) from Gossypium hirsutum (Upland cotton).